A 239-amino-acid polypeptide reads, in one-letter code: Protein GrpE (239 aa).

Disordered regions lie at residues 1–53 (MIEE…EDLK) and 210–239 (GPGQ…SEEN). 2 stretches are compositionally biased toward basic and acidic residues: residues 34–53 (NEDK…EDLK) and 219–230 (SEEKDKVDKDID).

The protein belongs to the GrpE family. In terms of assembly, homodimer.

The protein localises to the cytoplasm. Its function is as follows. Participates actively in the response to hyperosmotic and heat shock by preventing the aggregation of stress-denatured proteins, in association with DnaK and GrpE. It is the nucleotide exchange factor for DnaK and may function as a thermosensor. Unfolded proteins bind initially to DnaJ; upon interaction with the DnaJ-bound protein, DnaK hydrolyzes its bound ATP, resulting in the formation of a stable complex. GrpE releases ADP from DnaK; ATP binding to DnaK triggers the release of the substrate protein, thus completing the reaction cycle. Several rounds of ATP-dependent interactions between DnaJ, DnaK and GrpE are required for fully efficient folding. This Prochlorococcus marinus (strain MIT 9515) protein is Protein GrpE.